The primary structure comprises 140 residues: Large ribosomal subunit protein bL17 (140 aa).

Belongs to the bacterial ribosomal protein bL17 family. As to quaternary structure, part of the 50S ribosomal subunit. Contacts protein L32.

The protein is Large ribosomal subunit protein bL17 of Methylobacterium nodulans (strain LMG 21967 / CNCM I-2342 / ORS 2060).